Reading from the N-terminus, the 408-residue chain is LL-diaminopimelate aminotransferase (408 aa).

Substrate is bound by residues Y15 and G42. Pyridoxal 5'-phosphate is bound by residues Y72, 108–109 (SK), Y132, N187, Y218, and 246–248 (SFS). Substrate is bound by residues K109, Y132, and N187. At K249 the chain carries N6-(pyridoxal phosphate)lysine. The pyridoxal 5'-phosphate site is built by R257 and N292. 2 residues coordinate substrate: N292 and R388.

Belongs to the class-I pyridoxal-phosphate-dependent aminotransferase family. LL-diaminopimelate aminotransferase subfamily. As to quaternary structure, homodimer. The cofactor is pyridoxal 5'-phosphate.

It catalyses the reaction (2S,6S)-2,6-diaminopimelate + 2-oxoglutarate = (S)-2,3,4,5-tetrahydrodipicolinate + L-glutamate + H2O + H(+). Its pathway is amino-acid biosynthesis; L-lysine biosynthesis via DAP pathway; LL-2,6-diaminopimelate from (S)-tetrahydrodipicolinate (aminotransferase route): step 1/1. Its function is as follows. Involved in the synthesis of meso-diaminopimelate (m-DAP or DL-DAP), required for both lysine and peptidoglycan biosynthesis. Catalyzes the direct conversion of tetrahydrodipicolinate to LL-diaminopimelate. The protein is LL-diaminopimelate aminotransferase of Prochlorococcus marinus (strain SARG / CCMP1375 / SS120).